The primary structure comprises 194 residues: Large ribosomal subunit protein uL5 (194 aa).

It belongs to the universal ribosomal protein uL5 family. In terms of assembly, part of the 50S ribosomal subunit; part of the 5S rRNA/L5/L18/L25 subcomplex. Contacts the 5S rRNA and the P site tRNA. Forms a bridge to the 30S subunit in the 70S ribosome.

Functionally, this is one of the proteins that bind and probably mediate the attachment of the 5S RNA into the large ribosomal subunit, where it forms part of the central protuberance. In the 70S ribosome it contacts protein S13 of the 30S subunit (bridge B1b), connecting the 2 subunits; this bridge is implicated in subunit movement. Contacts the P site tRNA; the 5S rRNA and some of its associated proteins might help stabilize positioning of ribosome-bound tRNAs. The polypeptide is Large ribosomal subunit protein uL5 (Frankia alni (strain DSM 45986 / CECT 9034 / ACN14a)).